The primary structure comprises 267 residues: Palmitoyltransferase ZDHHC12 (267 aa).

Topologically, residues 1-9 are cytoplasmic; it reads MAPWALLSP. The chain crosses the membrane as a helical span at residues 10-30; the sequence is GVLVRTGHTVLTWGITLVLFL. Residues 31-43 are Lumenal-facing; it reads HDTELRQWEEQGE. Residues 44–64 form a helical membrane-spanning segment; that stretch reads LLLPLTFLLLVLGSLLLYLAV. Topologically, residues 65 to 140 are cytoplasmic; it reads SLMDPGYVNV…ENCVGERNHP (76 aa). The DHHC domain occupies 97–147; it reads RRCRYCLVLQPLRARHCRECRRCVRRYDHHCPWMENCVGERNHPLFVVYLA. Residue C127 is the S-palmitoyl cysteine intermediate of the active site. A helical transmembrane segment spans residues 141–161; sequence LFVVYLALQLVVLLWGLYLAW. At 162-178 the chain is on the lumenal side; sequence SGLRFFQPWGQWLRSSG. Residues 179–199 form a helical membrane-spanning segment; it reads LLFATFLLLSLFSLVASLLLV. The Cytoplasmic segment spans residues 200–267; the sequence is SHLYLVASNT…EEEEGSSPAV (68 aa).

It belongs to the DHHC palmitoyltransferase family. In terms of tissue distribution, widely expressed.

Its subcellular location is the golgi apparatus membrane. It is found in the endoplasmic reticulum membrane. The enzyme catalyses L-cysteinyl-[protein] + hexadecanoyl-CoA = S-hexadecanoyl-L-cysteinyl-[protein] + CoA. In terms of biological role, palmitoyltransferase that catalyzes the addition of palmitate onto various protein substrates. Has a palmitoyltransferase activity toward gephyrin/GPHN, regulating its clustering at synapses and its function in gamma-aminobutyric acid receptor clustering. Thereby, indirectly regulates GABAergic synaptic transmission. Negatively regulates NLRP3-driven inflammation. Catalyzes NLRP3 palmitoylation, leading to its degradation via the chaperone-mediated autophagy (CMA) process. This is Palmitoyltransferase ZDHHC12 from Homo sapiens (Human).